The chain runs to 200 residues: Protein OPI10 homolog (200 aa).

It belongs to the OPI10 family.

The protein resides in the cytoplasm. The protein localises to the nucleus envelope. The sequence is that of Protein OPI10 homolog from Schizosaccharomyces pombe (strain 972 / ATCC 24843) (Fission yeast).